A 227-amino-acid chain; its full sequence is uncharacterized protein (227 aa).

In terms of domain architecture, AMMECR1 spans 5–220 (TSSPYAFYAF…IAWDEFETGL (216 aa)).

This is an uncharacterized protein from Kluyveromyces lactis (strain ATCC 8585 / CBS 2359 / DSM 70799 / NBRC 1267 / NRRL Y-1140 / WM37) (Yeast).